The sequence spans 1481 residues: Protein shortage in chiasmata 1 ortholog (1481 aa).

2 disordered regions span residues 479–498 and 512–560; these read TDVH…EKEV and KSKV…IQAS. Over residues 513–531 the composition is skewed to basic and acidic residues; the sequence is SKVEANPKNDQEPEARIMQ. A compositionally biased stretch (low complexity) spans 543-560; sequence SSQVPSAESASSSQIQAS.

It belongs to the XPF family. Highly divergent. As to quaternary structure, interacts with TEX11. Interacts with SPO16. As to expression, mainly expressed in adult testis.

The protein localises to the chromosome. Its function is as follows. ATPase required during meiosis for the formation of crossover recombination intermediates. Binds DNA: preferentially binds to single-stranded DNA and DNA branched structures. Does not show nuclease activity in vitro, but shows ATPase activity, which is stimulated by the presence of single-stranded DNA. Plays a key role in homologous recombination and crossing-over in meiotic prophase I in male and female germ cells. Required for proper synaptonemal complex assembly and homologous chromosome pairing. Required for recruitment of TEX11 and MSH4 to recombination intermediates. The sequence is that of Protein shortage in chiasmata 1 ortholog from Mus musculus (Mouse).